Reading from the N-terminus, the 216-residue chain is Cytidylate kinase (216 aa).

10–18 (GPAGAGKST) provides a ligand contact to ATP.

Belongs to the cytidylate kinase family. Type 1 subfamily.

It is found in the cytoplasm. The catalysed reaction is CMP + ATP = CDP + ADP. It carries out the reaction dCMP + ATP = dCDP + ADP. This Clostridioides difficile (strain 630) (Peptoclostridium difficile) protein is Cytidylate kinase.